Here is a 241-residue protein sequence, read N- to C-terminus: Geranylgeranylglyceryl phosphate synthase (241 aa).

2 residues coordinate Mg(2+): D26 and S52. Sn-glycerol 1-phosphate-binding positions include 172-178 (YFEAGSG), 204-205 (GG), and 226-227 (GT).

The protein belongs to the GGGP/HepGP synthase family. Group II subfamily. Mg(2+) is required as a cofactor.

The protein resides in the cytoplasm. The catalysed reaction is sn-glycerol 1-phosphate + (2E,6E,10E)-geranylgeranyl diphosphate = sn-3-O-(geranylgeranyl)glycerol 1-phosphate + diphosphate. It participates in membrane lipid metabolism; glycerophospholipid metabolism. Prenyltransferase that catalyzes the transfer of the geranylgeranyl moiety of geranylgeranyl diphosphate (GGPP) to the C3 hydroxyl of sn-glycerol-1-phosphate (G1P). This reaction is the first ether-bond-formation step in the biosynthesis of archaeal membrane lipids. This is Geranylgeranylglyceryl phosphate synthase from Hyperthermus butylicus (strain DSM 5456 / JCM 9403 / PLM1-5).